Consider the following 101-residue polypeptide: Small ribosomal subunit protein uS10 (101 aa).

This sequence belongs to the universal ribosomal protein uS10 family. In terms of assembly, part of the 30S ribosomal subunit.

Involved in the binding of tRNA to the ribosomes. The sequence is that of Small ribosomal subunit protein uS10 from Mycobacterium bovis (strain ATCC BAA-935 / AF2122/97).